We begin with the raw amino-acid sequence, 750 residues long: Glutathione biosynthesis bifunctional protein GshAB (750 aa).

The glutamate--cysteine ligase stretch occupies residues 1-333 (MIIDRLLQRS…EANRLNDLIA (333 aa)). The disordered stretch occupies residues 32-51 (QPTQRVAQTPHPKTLGSRNY). An ATP-grasp domain is found at 489–747 (KKILDEKHFP…ITPRILAKLF (259 aa)). 516–574 (SQIQDKPIVVKPKSTNFGLGISIFKTSANLASYEKAIDIAFTEDSAILVEEYIEGTEYR) provides a ligand contact to ATP. Mg(2+) contacts are provided by aspartate 696, glutamate 717, and asparagine 719. Mn(2+) contacts are provided by aspartate 696, glutamate 717, and asparagine 719.

The protein in the N-terminal section; belongs to the glutamate--cysteine ligase type 1 family. Type 2 subfamily. In terms of assembly, monomer. The cofactor is Mg(2+). Mn(2+) serves as cofactor.

It catalyses the reaction L-cysteine + L-glutamate + ATP = gamma-L-glutamyl-L-cysteine + ADP + phosphate + H(+). It carries out the reaction gamma-L-glutamyl-L-cysteine + glycine + ATP = glutathione + ADP + phosphate + H(+). It participates in sulfur metabolism; glutathione biosynthesis; glutathione from L-cysteine and L-glutamate: step 1/2. Its pathway is sulfur metabolism; glutathione biosynthesis; glutathione from L-cysteine and L-glutamate: step 2/2. Its function is as follows. Synthesizes glutathione from L-glutamate and L-cysteine via gamma-L-glutamyl-L-cysteine. The sequence is that of Glutathione biosynthesis bifunctional protein GshAB from Streptococcus agalactiae serotype III (strain NEM316).